The sequence spans 353 residues: Fasciculation and elongation protein zeta-2 (353 aa).

The tract at residues 19 to 49 (SLLDQENCNASPEPGAEAGAEAGGGADGFPA) is disordered. The span at 28–38 (ASPEPGAEAGA) shows a compositional bias: low complexity. Residues Ser-135, Ser-176, and Ser-195 each carry the phosphoserine modification. Residues 214 to 286 (KRLSVSELNE…AKKKKKLKNG (73 aa)) are a coiled coil. The tract at residues 271 to 300 (KEHKETAKKKKKLKNGSSQNGKNERSHMPG) is disordered.

It belongs to the zygin family. In terms of assembly, homodimer; disulfide-linked. May form heterodimers with FEZ1. Interacts with synaptotagmin. As to expression, expressed in nonneural tissues, such as heart, lung, spleen, muscle, testis, placenta and melanocytes.

Its function is as follows. Involved in axonal outgrowth and fasciculation. The sequence is that of Fasciculation and elongation protein zeta-2 (FEZ2) from Homo sapiens (Human).